Reading from the N-terminus, the 617-residue chain is UvrABC system protein C (617 aa).

Positions 11–85 (TTPGVYIFRK…IKQHRPHYNV (75 aa)) constitute a GIY-YIG domain. The 36-residue stretch at 194-229 (APVIARLKEDMKVAAQGQDFEQAARLRDRVQAVEKL) folds into the UVR domain.

It belongs to the UvrC family. In terms of assembly, interacts with UvrB in an incision complex.

It localises to the cytoplasm. In terms of biological role, the UvrABC repair system catalyzes the recognition and processing of DNA lesions. UvrC both incises the 5' and 3' sides of the lesion. The N-terminal half is responsible for the 3' incision and the C-terminal half is responsible for the 5' incision. This is UvrABC system protein C from Deinococcus radiodurans (strain ATCC 13939 / DSM 20539 / JCM 16871 / CCUG 27074 / LMG 4051 / NBRC 15346 / NCIMB 9279 / VKM B-1422 / R1).